Here is a 99-residue protein sequence, read N- to C-terminus: Beta-defensin 127 (99 aa).

The N-terminal stretch at 1 to 20 (MGLFMIIAILLFQKPTVTEQ) is a signal peptide. 3 disulfides stabilise this stretch: Cys-24–Cys-53, Cys-33–Cys-47, and Cys-37–Cys-54. A propeptide spanning residues 66–99 (ITKPPRPKPATLALTLQDYVTIIENFPSLKTQST) is cleaved from the precursor.

The protein belongs to the beta-defensin family.

The protein resides in the secreted. In terms of biological role, has antibacterial activity. The polypeptide is Beta-defensin 127 (DEFB127) (Homo sapiens (Human)).